The sequence spans 173 residues: Putative metal-dependent hydrolase OB0413 (173 aa).

Residues His-64, His-155, and His-159 each coordinate Zn(2+).

The protein belongs to the metal hydrolase YfiT family. As to quaternary structure, homodimer. Requires Zn(2+) as cofactor.

Its subcellular location is the cytoplasm. Functionally, possible metal-dependent hydrolase. This is Putative metal-dependent hydrolase OB0413 from Oceanobacillus iheyensis (strain DSM 14371 / CIP 107618 / JCM 11309 / KCTC 3954 / HTE831).